Reading from the N-terminus, the 122-residue chain is Nuclear transport factor 2A (122 aa).

At methionine 1 the chain carries N-acetylmethionine. Positions 6 to 119 (VAKAFVEHYY…YYVFNDIFRL (114 aa)) constitute an NTF2 domain.

In terms of assembly, interacts with RAN1. Expressed in roots, stems, leaves and flowers, and, at low levels, in siliques.

The protein localises to the cytoplasm. It is found in the nucleus. Its subcellular location is the nucleus envelope. In terms of biological role, facilitates protein transport into the nucleus. Interacts with various nucleoporins and with Ran-GDP. Could be part of a multicomponent system of cytosolic factors that assemble at the pore complex during nuclear import. In Arabidopsis thaliana (Mouse-ear cress), this protein is Nuclear transport factor 2A.